The chain runs to 544 residues: MDSQRNLLLIALLFVTFMLWQAWETDKNPPATTQAIQQATNAVTGDATNQGVPASGQGKLITVKTDVLSLTINTRGGDVEQAHLLAYPDTLGSDKPFHLLETTSEFVYQAQSGLTGKNGPDNPANGPRPLFTTTQDSFELADGQNELRIPMTYTAADGVTYTKTFVLKRGDYALNVDYSVNNTSAQPLELTLFGQLKQSIDLPKHRDTGSSNFALHTYRGAAFSSSEDKYKKYSFSDMDENLNITTNSGWVAMLQQYFATAWIPTTAGANTFYTNKLGNGQAAIGFKAAPVVVAAGSQQNLNATLWVGPEIQDKMAAVAPHLDLTVDYGWLWFISQPLFKLLKFLHGFIGNWGFSIIAITFIVRGVMYPLTKAQYTSMAKMRLLQPKLQAMRERIGDDKQRMSQEMMALYKSEKVNPLGGCFPLLIQMPIFLALYYMLMGSVELRHAPFALWIHDLSAQDPYYILPILMGVTMFFIQKMSPTTVTDPMQQKIMTYMPVIFTVFFLWFPSGLVMYYIVSNLVTILQQQLIYRGLEKRGLHSREKK.

Residues 6–26 (NLLLIALLFVTFMLWQAWETD) traverse the membrane as a helical segment. The tract at residues 112–132 (SGLTGKNGPDNPANGPRPLFT) is disordered. 4 helical membrane-spanning segments follow: residues 343–363 (KFLH…TFIV), 418–438 (LGGC…YYML), 456–476 (LSAQ…MFFI), and 497–517 (PVIF…YYIV).

This sequence belongs to the OXA1/ALB3/YidC family. Type 1 subfamily. In terms of assembly, interacts with the Sec translocase complex via SecD. Specifically interacts with transmembrane segments of nascent integral membrane proteins during membrane integration.

The protein localises to the cell inner membrane. Functionally, required for the insertion and/or proper folding and/or complex formation of integral membrane proteins into the membrane. Involved in integration of membrane proteins that insert both dependently and independently of the Sec translocase complex, as well as at least some lipoproteins. Aids folding of multispanning membrane proteins. This chain is Membrane protein insertase YidC, found in Pectobacterium carotovorum subsp. carotovorum (strain PC1).